Consider the following 196-residue polypeptide: dITP/XTP pyrophosphatase (196 aa).

A substrate-binding site is contributed by 10–15 (TTNPHK). The Proton acceptor role is filled by Asp-68. Asp-68 provides a ligand contact to Mg(2+). Substrate is bound by residues Ser-69, 148–151 (FGYD), and 175–176 (HR).

Belongs to the HAM1 NTPase family. In terms of assembly, homodimer. Requires Mg(2+) as cofactor.

The enzyme catalyses XTP + H2O = XMP + diphosphate + H(+). It catalyses the reaction dITP + H2O = dIMP + diphosphate + H(+). It carries out the reaction ITP + H2O = IMP + diphosphate + H(+). Its function is as follows. Pyrophosphatase that catalyzes the hydrolysis of nucleoside triphosphates to their monophosphate derivatives, with a high preference for the non-canonical purine nucleotides XTP (xanthosine triphosphate), dITP (deoxyinosine triphosphate) and ITP. Seems to function as a house-cleaning enzyme that removes non-canonical purine nucleotides from the nucleotide pool, thus preventing their incorporation into DNA/RNA and avoiding chromosomal lesions. In Thermotoga maritima (strain ATCC 43589 / DSM 3109 / JCM 10099 / NBRC 100826 / MSB8), this protein is dITP/XTP pyrophosphatase.